Here is a 150-residue protein sequence, read N- to C-terminus: UPF0506 protein SJCHGC02381 (150 aa).

The N-terminal stretch at 1 to 18 (MNTCIQLLILCLVTVINS) is a signal peptide. N-linked (GlcNAc...) asparagine glycosylation is found at N20, N24, N32, N36, N48, N52, N64, and N110. Residues 22 to 49 (TDNSTENTIKNETENATETELPETFENE) form a disordered region. A compositionally biased stretch (acidic residues) spans 36 to 49 (NATETELPETFENE). 3 disulfide bridges follow: C116-C130, C123-C134, and C129-C139.

It belongs to the UPF0506 family.

It is found in the secreted. The polypeptide is UPF0506 protein SJCHGC02381 (Schistosoma japonicum (Blood fluke)).